Consider the following 387-residue polypeptide: Protein RecA (387 aa).

80-87 (GPESSGKT) lines the ATP pocket. The interval 348–387 (LDDSEVAETEEETTASKTKAKAKKEEKXVETEEIELELQD) is disordered. 2 stretches are compositionally biased toward acidic residues: residues 349–360 (DDSEVAETEEET) and 378–387 (TEEIELELQD).

Belongs to the RecA family.

Its subcellular location is the cytoplasm. Can catalyze the hydrolysis of ATP in the presence of single-stranded DNA, the ATP-dependent uptake of single-stranded DNA by duplex DNA, and the ATP-dependent hybridization of homologous single-stranded DNAs. It interacts with LexA causing its activation and leading to its autocatalytic cleavage. The protein is Protein RecA of Lactococcus lactis subsp. cremoris (Streptococcus cremoris).